Consider the following 1088-residue polypeptide: RNA-directed RNA polymerase (1088 aa).

Positions leucine 501–isoleucine 687 constitute a RdRp catalytic domain.

It belongs to the reoviridae RNA-directed RNA polymerase family. As to quaternary structure, interacts with VP3 (Potential). Interacts with VP2; this interaction activates VP1. Interacts with NSP5; this interaction is probably necessary for the formation of functional virus factories. Interacts with NSP2; this interaction is weak. Mg(2+) serves as cofactor.

It localises to the virion. It catalyses the reaction RNA(n) + a ribonucleoside 5'-triphosphate = RNA(n+1) + diphosphate. Functionally, RNA-directed RNA polymerase that is involved in both transcription and genome replication. Together with VP3 capping enzyme, forms an enzyme complex positioned near the channels situated at each of the five-fold vertices of the core. Following infection, the outermost layer of the virus is lost, leaving a double-layered particle (DLP) made up of the core and VP6 shell. VP1 then catalyzes the transcription of fully conservative plus-strand genomic RNAs that are extruded through the DLP's channels into the cytoplasm where they function as mRNAs for translation of viral proteins. One copy of each of the viral (+)RNAs is also recruited during core assembly, together with newly synthesized polymerase complexes and VP2. The polymerase of these novo-formed particles catalyzes the synthesis of complementary minus-strands leading to dsRNA formation. To do so, the polymerase specifically recognizes and binds 4 bases 5'-UGUG-3' in the conserved 3'-sequence of plus-strand RNA templates. VP2 presumably activates the autoinhibited VP1-RNA complex to coordinate packaging and genome replication. Once dsRNA synthesis is complete, the polymerase switches to the transcriptional mode, thus providing secondary transcription. This chain is RNA-directed RNA polymerase, found in Rotavirus A (strain RVA/SA11-Patton/G3P[X]) (RV-A).